A 280-amino-acid polypeptide reads, in one-letter code: Shikimate dehydrogenase (NADP(+)) (280 aa).

Residues 19-21 (SFS) and threonine 66 each bind shikimate. The active-site Proton acceptor is lysine 70. Glutamate 82 is a binding site for NADP(+). The shikimate site is built by asparagine 91 and aspartate 106. NADP(+) is bound by residues 130-134 (GSGGA) and leucine 222. Residue tyrosine 224 participates in shikimate binding. Residue glycine 245 coordinates NADP(+).

The protein belongs to the shikimate dehydrogenase family. As to quaternary structure, homodimer.

The enzyme catalyses shikimate + NADP(+) = 3-dehydroshikimate + NADPH + H(+). It participates in metabolic intermediate biosynthesis; chorismate biosynthesis; chorismate from D-erythrose 4-phosphate and phosphoenolpyruvate: step 4/7. Its function is as follows. Involved in the biosynthesis of the chorismate, which leads to the biosynthesis of aromatic amino acids. Catalyzes the reversible NADPH linked reduction of 3-dehydroshikimate (DHSA) to yield shikimate (SA). The polypeptide is Shikimate dehydrogenase (NADP(+)) (Methanococcus maripaludis (strain C7 / ATCC BAA-1331)).